The primary structure comprises 338 residues: Flap endonuclease 1 (338 aa).

Positions 1–98 (MGTDIGDLLL…DTLAKRHEVR (98 aa)) are N-domain. Mg(2+) contacts are provided by Asp-27, Asp-80, Glu-152, Glu-154, Asp-173, Asp-175, and Asp-236. The I-domain stretch occupies residues 116–257 (EAYKYAQASS…RALKLVKEHG (142 aa)). The interval 330 to 338 (SQSTLDQWF) is interaction with PCNA.

Belongs to the XPG/RAD2 endonuclease family. FEN1 subfamily. In terms of assembly, interacts with PCNA. PCNA stimulates the nuclease activity without altering cleavage specificity. Requires Mg(2+) as cofactor.

Functionally, structure-specific nuclease with 5'-flap endonuclease and 5'-3' exonuclease activities involved in DNA replication and repair. During DNA replication, cleaves the 5'-overhanging flap structure that is generated by displacement synthesis when DNA polymerase encounters the 5'-end of a downstream Okazaki fragment. Binds the unpaired 3'-DNA end and kinks the DNA to facilitate 5' cleavage specificity. Cleaves one nucleotide into the double-stranded DNA from the junction in flap DNA, leaving a nick for ligation. Also involved in the base excision repair (BER) pathway. Acts as a genome stabilization factor that prevents flaps from equilibrating into structures that lead to duplications and deletions. Also possesses 5'-3' exonuclease activity on nicked or gapped double-stranded DNA. This chain is Flap endonuclease 1, found in Methanococcoides burtonii (strain DSM 6242 / NBRC 107633 / OCM 468 / ACE-M).